Here is a 325-residue protein sequence, read N- to C-terminus: Putative carboxypeptidase YocD (325 aa).

Ser111 (nucleophile) is an active-site residue. Residues Glu228 and His296 each act as charge relay system in the active site.

It belongs to the peptidase S66 family.

This is Putative carboxypeptidase YocD (yocD) from Bacillus subtilis (strain 168).